The sequence spans 128 residues: Large ribosomal subunit protein bL19 (128 aa).

Belongs to the bacterial ribosomal protein bL19 family.

This protein is located at the 30S-50S ribosomal subunit interface and may play a role in the structure and function of the aminoacyl-tRNA binding site. This chain is Large ribosomal subunit protein bL19, found in Paracidovorax citrulli (strain AAC00-1) (Acidovorax citrulli).